We begin with the raw amino-acid sequence, 634 residues long: 1-deoxy-D-xylulose-5-phosphate synthase (634 aa).

Thiamine diphosphate-binding positions include H74 and 115–117 (AHS). Residue D146 coordinates Mg(2+). Thiamine diphosphate-binding positions include 147–148 (GA), N176, Y283, and E365. Mg(2+) is bound at residue N176.

It belongs to the transketolase family. DXPS subfamily. Homodimer. The cofactor is Mg(2+). It depends on thiamine diphosphate as a cofactor.

It catalyses the reaction D-glyceraldehyde 3-phosphate + pyruvate + H(+) = 1-deoxy-D-xylulose 5-phosphate + CO2. The protein operates within metabolic intermediate biosynthesis; 1-deoxy-D-xylulose 5-phosphate biosynthesis; 1-deoxy-D-xylulose 5-phosphate from D-glyceraldehyde 3-phosphate and pyruvate: step 1/1. Catalyzes the acyloin condensation reaction between C atoms 2 and 3 of pyruvate and glyceraldehyde 3-phosphate to yield 1-deoxy-D-xylulose-5-phosphate (DXP). In Burkholderia cenocepacia (strain ATCC BAA-245 / DSM 16553 / LMG 16656 / NCTC 13227 / J2315 / CF5610) (Burkholderia cepacia (strain J2315)), this protein is 1-deoxy-D-xylulose-5-phosphate synthase.